A 288-amino-acid polypeptide reads, in one-letter code: Bifunctional protein FolD (288 aa).

Residues 166–168 (GAS) and Ile232 contribute to the NADP(+) site.

Belongs to the tetrahydrofolate dehydrogenase/cyclohydrolase family. In terms of assembly, homodimer.

The catalysed reaction is (6R)-5,10-methylene-5,6,7,8-tetrahydrofolate + NADP(+) = (6R)-5,10-methenyltetrahydrofolate + NADPH. It catalyses the reaction (6R)-5,10-methenyltetrahydrofolate + H2O = (6R)-10-formyltetrahydrofolate + H(+). The protein operates within one-carbon metabolism; tetrahydrofolate interconversion. Catalyzes the oxidation of 5,10-methylenetetrahydrofolate to 5,10-methenyltetrahydrofolate and then the hydrolysis of 5,10-methenyltetrahydrofolate to 10-formyltetrahydrofolate. In Escherichia coli (strain UTI89 / UPEC), this protein is Bifunctional protein FolD.